The primary structure comprises 753 residues: Catalase-peroxidase (753 aa).

Positions 91 to 243 form a cross-link, tryptophyl-tyrosyl-methioninium (Trp-Tyr) (with M-269); sequence WHSAGTYRIG…LGAVQMGLIY (153 aa). The active-site Proton acceptor is the H92. The tryptophyl-tyrosyl-methioninium (Tyr-Met) (with W-91) cross-link spans 243–269; the sequence is YVNPEGPDGNPDPLAAAHDIRETFARM. H284 is a heme b binding site.

The protein belongs to the peroxidase family. Peroxidase/catalase subfamily. As to quaternary structure, homodimer or homotetramer. Requires heme b as cofactor. In terms of processing, formation of the three residue Trp-Tyr-Met cross-link is important for the catalase, but not the peroxidase activity of the enzyme.

It carries out the reaction H2O2 + AH2 = A + 2 H2O. The catalysed reaction is 2 H2O2 = O2 + 2 H2O. Functionally, bifunctional enzyme with both catalase and broad-spectrum peroxidase activity. The sequence is that of Catalase-peroxidase from Paraburkholderia xenovorans (strain LB400).